The primary structure comprises 239 residues: Probable transcriptional regulatory protein BC_0539 (239 aa).

This sequence belongs to the TACO1 family. YeeN subfamily.

Its subcellular location is the cytoplasm. The protein is Probable transcriptional regulatory protein BC_0539 of Bacillus cereus (strain ATCC 14579 / DSM 31 / CCUG 7414 / JCM 2152 / NBRC 15305 / NCIMB 9373 / NCTC 2599 / NRRL B-3711).